Reading from the N-terminus, the 460-residue chain is Chromosomal replication initiator protein DnaA (460 aa).

Positions 1 to 78 (MENFWQACSA…VPVEVQFVLD (78 aa)) are domain I, interacts with DnaA modulators. The interval 78-123 (DPRLVAARRPAAQASVVSDRADDVPSNVLEPIPSNATDHTPRRDQS) is domain II. Residues 124 to 340 (RINTALTFDS…GALRKILAYS (217 aa)) form a domain III, AAA+ region region. ATP contacts are provided by G168, G170, K171, and T172. The tract at residues 341-460 (RFHGKDITIE…LHVLEQTLKG (120 aa)) is domain IV, binds dsDNA.

The protein belongs to the DnaA family. Oligomerizes as a right-handed, spiral filament on DNA at oriC.

The protein resides in the cytoplasm. In terms of biological role, plays an essential role in the initiation and regulation of chromosomal replication. ATP-DnaA binds to the origin of replication (oriC) to initiate formation of the DNA replication initiation complex once per cell cycle. Binds the DnaA box (a 9 base pair repeat at the origin) and separates the double-stranded (ds)DNA. Forms a right-handed helical filament on oriC DNA; dsDNA binds to the exterior of the filament while single-stranded (ss)DNA is stabiized in the filament's interior. The ATP-DnaA-oriC complex binds and stabilizes one strand of the AT-rich DNA unwinding element (DUE), permitting loading of DNA polymerase. After initiation quickly degrades to an ADP-DnaA complex that is not apt for DNA replication. Binds acidic phospholipids. This is Chromosomal replication initiator protein DnaA from Herminiimonas arsenicoxydans.